Consider the following 231-residue polypeptide: U1 small nuclear ribonucleoprotein C (231 aa).

The Matrin-type zinc-finger motif lies at 4-36; sequence YYCEYCHSYLTHDTLSVRKSHLVGKNHLRITAD. Basic residues predominate over residues 49–61; the sequence is HNHKRRHIGKRGR. Disordered stretches follow at residues 49–71, 137–177, and 205–231; these read HNHKRRHIGKRGRKERENSSQNE, PQRA…LEPP, and ESKKRMHSDGIRKPSSANGYKRRRYGN.

This sequence belongs to the U1 small nuclear ribonucleoprotein C family. As to quaternary structure, U1 snRNP is composed of the 7 core Sm proteins SMB1, SMD1, SMD2, SMD3, SME1, SMX3 and SMX2 (Sm proteins B, D1, D2, D3, E, F and G, respectively) that assemble in a heptameric protein ring on the Sm site of the small nuclear RNA to form the core snRNP, and at least 10 U1 snRNP-specific proteins SNP1/U1-70K, MUD1/U1-A, YHC1/U1-C, LUC7, NAM8, PRP39, PRP40, PRP42, SNU56 and SNU71. YHC1/U1-C interacts with U1 snRNA and the 5' splice-site region of the pre-mRNA.

Its subcellular location is the nucleus. Functionally, component of the spliceosomal U1 snRNP, which is essential for recognition of the pre-mRNA 5' splice-site and the subsequent assembly of the spliceosome. YHC1/U1-C is directly involved in initial 5' splice-site recognition for both constitutive and regulated alternative splicing. The interaction with the 5' splice-site seems to precede base-pairing between the pre-mRNA and the U1 snRNA. Stimulates commitment or early (E) complex formation by stabilizing the base pairing of the 5' end of the U1 snRNA and the 5' splice-site region. This is U1 small nuclear ribonucleoprotein C from Saccharomyces cerevisiae (strain ATCC 204508 / S288c) (Baker's yeast).